Consider the following 376-residue polypeptide: Erythronate-4-phosphate dehydrogenase (376 aa).

Residues S45 and T66 each contribute to the substrate site. The NAD(+) site is built by D146 and T175. R209 is an active-site residue. An NAD(+)-binding site is contributed by D233. The active site involves E238. Catalysis depends on H255, which acts as the Proton donor. Position 258 (G258) interacts with NAD(+). Y259 is a substrate binding site.

It belongs to the D-isomer specific 2-hydroxyacid dehydrogenase family. PdxB subfamily. Homodimer.

It localises to the cytoplasm. It catalyses the reaction 4-phospho-D-erythronate + NAD(+) = (R)-3-hydroxy-2-oxo-4-phosphooxybutanoate + NADH + H(+). The protein operates within cofactor biosynthesis; pyridoxine 5'-phosphate biosynthesis; pyridoxine 5'-phosphate from D-erythrose 4-phosphate: step 2/5. In terms of biological role, catalyzes the oxidation of erythronate-4-phosphate to 3-hydroxy-2-oxo-4-phosphonooxybutanoate. This is Erythronate-4-phosphate dehydrogenase from Baumannia cicadellinicola subsp. Homalodisca coagulata.